The primary structure comprises 223 residues: Cytidylate kinase (223 aa).

An ATP-binding site is contributed by 10–18 (GPASSGKST).

Belongs to the cytidylate kinase family. Type 1 subfamily.

It localises to the cytoplasm. It carries out the reaction CMP + ATP = CDP + ADP. The enzyme catalyses dCMP + ATP = dCDP + ADP. In Streptococcus pneumoniae serotype 4 (strain ATCC BAA-334 / TIGR4), this protein is Cytidylate kinase.